The primary structure comprises 320 residues: Bifunctional ligase/repressor BirA (320 aa).

The H-T-H motif DNA-binding region spans 22–41; the sequence is GEQLGERLGMSRAAINKHIQ. The BPL/LPL catalytic domain occupies 66–254; it reads LLDADRIHSQ…KLRAALELFE (189 aa). Biotin contacts are provided by residues 89-91, Gln-112, 116-118, and Lys-183; these read STN and RGR.

It belongs to the biotin--protein ligase family.

The catalysed reaction is biotin + L-lysyl-[protein] + ATP = N(6)-biotinyl-L-lysyl-[protein] + AMP + diphosphate + H(+). Its function is as follows. Acts both as a biotin--[acetyl-CoA-carboxylase] ligase and a biotin-operon repressor. In the presence of ATP, BirA activates biotin to form the BirA-biotinyl-5'-adenylate (BirA-bio-5'-AMP or holoBirA) complex. HoloBirA can either transfer the biotinyl moiety to the biotin carboxyl carrier protein (BCCP) subunit of acetyl-CoA carboxylase, or bind to the biotin operator site and inhibit transcription of the operon. In Salmonella typhimurium (strain LT2 / SGSC1412 / ATCC 700720), this protein is Bifunctional ligase/repressor BirA.